We begin with the raw amino-acid sequence, 389 residues long: ATP phosphoribosyltransferase regulatory subunit (389 aa).

It belongs to the class-II aminoacyl-tRNA synthetase family. HisZ subfamily. In terms of assembly, heteromultimer composed of HisG and HisZ subunits.

The protein resides in the cytoplasm. Its pathway is amino-acid biosynthesis; L-histidine biosynthesis; L-histidine from 5-phospho-alpha-D-ribose 1-diphosphate: step 1/9. Required for the first step of histidine biosynthesis. May allow the feedback regulation of ATP phosphoribosyltransferase activity by histidine. The polypeptide is ATP phosphoribosyltransferase regulatory subunit (Hydrogenovibrio crunogenus (strain DSM 25203 / XCL-2) (Thiomicrospira crunogena)).